Consider the following 683-residue polypeptide: DNA-directed RNA polymerase subunit beta' (683 aa).

Zn(2+) is bound by residues cysteine 69, cysteine 71, cysteine 87, and cysteine 90. Mg(2+) is bound by residues aspartate 489, aspartate 491, and aspartate 493.

This sequence belongs to the RNA polymerase beta' chain family. RpoC1 subfamily. In plastids the minimal PEP RNA polymerase catalytic core is composed of four subunits: alpha, beta, beta', and beta''. When a (nuclear-encoded) sigma factor is associated with the core the holoenzyme is formed, which can initiate transcription. Mg(2+) serves as cofactor. The cofactor is Zn(2+).

It localises to the plastid. The protein localises to the chloroplast. It catalyses the reaction RNA(n) + a ribonucleoside 5'-triphosphate = RNA(n+1) + diphosphate. In terms of biological role, DNA-dependent RNA polymerase catalyzes the transcription of DNA into RNA using the four ribonucleoside triphosphates as substrates. The chain is DNA-directed RNA polymerase subunit beta' from Zea mays (Maize).